The chain runs to 265 residues: MNDMRILERDVDAKAIKISARDVQVFYGDNHAIKDVNVEIQDKTVTAFIGPSGCGKSTFLRCLNRMNDTIDVCRVQGRITIDGEDIYDKRVDPVQLRAKVGMVFQKPNPFPKSIYDNVAYGPRIHGLAQNKAELDNLVENSLRRAALWGEVKDRLGAPGTGLSGGQQQRLCIARAVATQPEVLLMDEPCSALDPIATAQVEELIDDLRQNYSVVIVTHSMQQAARVSQKTAFFHLGNLVEYGETGTIFTNPEDPRTESYITGRIG.

In terms of domain architecture, ABC transporter spans 18-260 (ISARDVQVFY…PEDPRTESYI (243 aa)). Position 50 to 57 (50 to 57 (GPSGCGKS)) interacts with ATP.

The protein belongs to the ABC transporter superfamily. Phosphate importer (TC 3.A.1.7) family. In terms of assembly, the complex is composed of two ATP-binding proteins (PstB), two transmembrane proteins (PstC and PstA) and a solute-binding protein (PstS).

It is found in the cell inner membrane. The catalysed reaction is phosphate(out) + ATP + H2O = ADP + 2 phosphate(in) + H(+). Functionally, part of the ABC transporter complex PstSACB involved in phosphate import. Responsible for energy coupling to the transport system. The polypeptide is Phosphate import ATP-binding protein PstB (Roseobacter denitrificans (strain ATCC 33942 / OCh 114) (Erythrobacter sp. (strain OCh 114))).